The primary structure comprises 231 residues: Casparian strip membrane protein 1 (231 aa).

Residues 1–69 (MSTSETATVI…FRQSDRGSRC (69 aa)) lie on the Cytoplasmic side of the membrane. The chain crosses the membrane as a helical span at residues 70–90 (LAFLDFLLRIAAFGPALAAAI). At 91–117 (ATGTSDETLSVFTEFFQFRARFDDFPA) the chain is on the extracellular side. Residues 118 to 138 (FLFLMVANAIAAGYLVLSLPF) traverse the membrane as a helical segment. Topologically, residues 139 to 152 (SAVVVLRPQATGLR) are cytoplasmic. A helical transmembrane segment spans residues 153–173 (LLLLVCDTIMIGLLTAAAAAA). The Extracellular segment spans residues 174–207 (AAIVELAHNGNERANWVAICMQFHGFCQRTSGAV). Residues 208–228 (VASFLSVFLFLLLVVLAAFAI) traverse the membrane as a helical segment. Residues 229–231 (RKR) lie on the Cytoplasmic side of the membrane.

The protein belongs to the Casparian strip membrane proteins (CASP) family. Homodimer and heterodimers.

The protein resides in the cell membrane. Functionally, regulates membrane-cell wall junctions and localized cell wall deposition. Required for establishment of the Casparian strip membrane domain (CSD) and the subsequent formation of Casparian strips, a cell wall modification of the root endodermis that determines an apoplastic barrier between the intraorganismal apoplasm and the extraorganismal apoplasm and prevents lateral diffusion. This is Casparian strip membrane protein 1 from Brachypodium distachyon (Purple false brome).